We begin with the raw amino-acid sequence, 805 residues long: G-type lectin S-receptor-like serine/threonine-protein kinase SD1-29 (805 aa).

A signal peptide spans 1–21 (MGMVLFACLLLLIIFPTCGYA). The region spanning 22–141 (AINTSSPLSI…VSGNKLWQSF (120 aa)) is the Bulb-type lectin domain. At 22–428 (AINTSSPLSI…SELAGSSRRK (407 aa)) the chain is on the extracellular side. N-linked (GlcNAc...) asparagine glycans are attached at residues Asn24, Asn50, Asn85, Asn91, and Asn248. The EGF-like domain maps to 277-313 (PENPCDLYGRCGPYGLCVRSDPPKCECLKGFVPKSDE). Intrachain disulfides connect Cys281/Cys293 and Cys287/Cys301. N-linked (GlcNAc...) asparagine glycans are attached at residues Asn319 and Asn378. Positions 332 to 418 (CQAKSSMKTQ…GEFLFIRLAS (87 aa)) constitute a PAN domain. Disulfide bonds link Cys371–Cys392 and Cys375–Cys381. The helical transmembrane segment at 429-449 (IIVGTTVSLSIFLILVFAAIM) threads the bilayer. At 450–805 (LWRYRAKQND…EMTESMIQGR (356 aa)) the chain is on the cytoplasmic side. In terms of domain architecture, Protein kinase spans 488–773 (FSPSNKLGQG…DLPVPKQPIF (286 aa)). ATP contacts are provided by residues 494 to 502 (LGQGGFGPV) and Lys516. Residues Ser522 and Ser537 each carry the phosphoserine modification. Residues 577–594 (CLKFELDWPKRFNIIQGI) form a caM-binding region. Tyr600 bears the Phosphotyrosine mark. Asp613 acts as the Proton acceptor in catalysis. Phosphoserine occurs at positions 617 and 630. Phosphothreonine is present on Thr647. Phosphoserine is present on residues Ser690 and Ser793.

It belongs to the protein kinase superfamily. Ser/Thr protein kinase family. Interacts with PUB9, PUB13, PUB14, PUB29, PUB38, PUB44 and PUB45. Interacts with PBL34, PBL35 and PBL36. In terms of processing, autophosphorylated at Tyr-600. Autophosphorylation at Tyr-600 is required for downstream phosphorylation of the receptor-like cytoplasmic kinase PBL34, PBL35 and PBL36, and activation of plant immunity.

It is found in the cell membrane. The catalysed reaction is L-seryl-[protein] + ATP = O-phospho-L-seryl-[protein] + ADP + H(+). It carries out the reaction L-threonyl-[protein] + ATP = O-phospho-L-threonyl-[protein] + ADP + H(+). It catalyses the reaction L-tyrosyl-[protein] + ATP = O-phospho-L-tyrosyl-[protein] + ADP + H(+). S-domain receptor protein kinase involved in lipopolysaccharide (LPS) sensing. Specifically detects LPS of Pseudomonas and Xanthomonas species. LPS are major components of the outer membrane of Gram-negative bacteria and are important microbe-associated molecular patterns (MAMPs) that trigger biphasic production of reactive oxygen species (ROS) and immune responses in plants. Seems to be only partially associated with the second LPS-triggered ROS burst. Mediates defense signaling in response to the medium-chain 3-hydroxy fatty acid 3-OH-C10:0, a pathogen-associated molecular pattern (PAMP) which induces autophosphorylation at Tyr-600. Autophosphorylation at Tyr-600 is required for downstream phosphorylation of the receptor-like cytoplasmic kinase PBL34, PBL35 and PBL36, and activation of plant immunity. In terms of biological role, (Microbial infection) Targeted by the bacterial type III effector protein tyrosine phosphatase HopAO1 from Pseudomonas syringae. HopAO1 dephosphorylates Tyr-600, which suppresses the immune response. The sequence is that of G-type lectin S-receptor-like serine/threonine-protein kinase SD1-29 from Arabidopsis thaliana (Mouse-ear cress).